A 1330-amino-acid chain; its full sequence is Kinectin (1330 aa).

Residues 1–6 (MEFYES) are Cytoplasmic-facing. Residues 7-29 (TYFIVLIPSVVITVIFLFFWLFM) traverse the membrane as a helical; Signal-anchor for type II membrane protein segment. At 30 to 1330 (KETLYDEVLA…KEKEHYQVLE (1301 aa)) the chain is on the lumenal side. Disordered stretches follow at residues 49–81 (PTKTDKKKAEKKKNKKKEIQNGNLHESDSESVP) and 108–218 (SSSV…KQKA). 2 positions are modified to phosphoserine: serine 75 and serine 77. Residues 113 to 122 (ERKKKEKKHK) show a composition bias toward basic residues. Residues 123–135 (PVLEEQVTKESDV) show a composition bias toward basic and acidic residues. A Phosphothreonine modification is found at threonine 153. Serine 156 carries the phosphoserine modification. Basic residues predominate over residues 161 to 171 (SKKKPGQKKSK). N-linked (GlcNAc...) asparagine glycosylation is found at asparagine 172, asparagine 435, asparagine 772, asparagine 904, and asparagine 1055. Residues 172 to 182 (NGSDDQDKKVE) show a composition bias toward basic and acidic residues. Residues 332–1329 (HQLQEKDKLL…TKEKEHYQVL (998 aa)) are a coiled coil. Position 1085 is a phosphoserine (serine 1085). Residue asparagine 1236 is glycosylated (N-linked (GlcNAc...) asparagine). Serine 1286 is modified (phosphoserine). Asparagine 1302 is a glycosylation site (N-linked (GlcNAc...) asparagine).

It belongs to the kinectin family. As to quaternary structure, parallel homodimers formed between the membrane-bound and the cytosolic form, and also between 2 cytosolic forms. Expressed in male brain, heart, kidney, liver, lung, spleen and testis.

Its subcellular location is the endoplasmic reticulum membrane. Its function is as follows. Receptor for kinesin thus involved in kinesin-driven vesicle motility. This Vulpes vulpes (Red fox) protein is Kinectin (KTN1).